The following is a 499-amino-acid chain: UTP--glucose-1-phosphate uridylyltransferase (499 aa).

The residue at position 2 (Ser2) is an N-acetylserine. At Ser17 the chain carries Phosphoserine. Thr19 carries the phosphothreonine modification. A phosphoserine mark is found at Ser21 and Ser79. Residues 109 to 112 (LNGG), Lys123, Gln186, and Gly215 contribute to the UTP site. Position 111–112 (111–112 (GG)) interacts with substrate. Lys123 contributes to the Mg(2+) binding site. Substrate contacts are provided by residues His216 and 244–246 (NGD). Asp246 lines the UTP pocket. Residue Asp246 coordinates Mg(2+). The residue at position 369 (Arg369) is an Omega-N-methylarginine. Lys388 contacts UTP. The active site involves Lys388. The segment at 448 to 499 (HLTITGNVFLGKDVTLRGTVIIVCSDGHKIDIPNGSILENVVVTGNLQILEH) is oligomerization.

The protein belongs to the UDPGP type 1 family. Homooctamer.

The enzyme catalyses alpha-D-glucose 1-phosphate + UTP + H(+) = UDP-alpha-D-glucose + diphosphate. In terms of biological role, plays a central role as a glucosyl donor in cellular metabolic pathways. The sequence is that of UTP--glucose-1-phosphate uridylyltransferase from Saccharomyces cerevisiae (strain ATCC 204508 / S288c) (Baker's yeast).